Here is a 394-residue protein sequence, read N- to C-terminus: UDP-glucose 6-dehydrogenase (394 aa).

NAD(+) contacts are provided by residues 2-19 (KIAIAGSGYVGLSLAVLL), Val11, Asp29, Lys34, Thr83, Thr118, and Glu145. Substrate is bound by residues 141-145 (EFLRE), Lys203, Asn207, 248-252 (YNNPS), and Gly256. Residue Tyr258 coordinates NAD(+). Cys259 (nucleophile) is an active-site residue. Lys262 is a binding site for NAD(+). Lys313 is a substrate binding site. An NAD(+)-binding site is contributed by Arg320.

This sequence belongs to the UDP-glucose/GDP-mannose dehydrogenase family.

The enzyme catalyses UDP-alpha-D-glucose + 2 NAD(+) + H2O = UDP-alpha-D-glucuronate + 2 NADH + 3 H(+). It participates in nucleotide-sugar biosynthesis; UDP-alpha-D-glucuronate biosynthesis; UDP-alpha-D-glucuronate from UDP-alpha-D-glucose: step 1/1. Functionally, catalyzes the formation of UDP-glucuronic acid which is required for capsular hyaluronic acid synthesis. Directly responsible for the transformation of some unencapsulated serotype-3 SP mutants to the encapsulated phenotype. This is UDP-glucose 6-dehydrogenase (cap3A) from Streptococcus pneumoniae.